The chain runs to 142 residues: uncharacterized protein (142 aa).

Positions 18–137 (QSSGYSCGPA…KIFTGNVLVV (120 aa)) constitute a Peptidase C39 domain.

This is an uncharacterized protein from Methanothermobacter marburgensis (strain ATCC BAA-927 / DSM 2133 / JCM 14651 / NBRC 100331 / OCM 82 / Marburg) (Methanobacterium thermoautotrophicum).